The chain runs to 320 residues: Olfactory receptor 52N1 (320 aa).

Residues 1-27 (MSFLNGTSLTPASFILNGIPGLEDVHL) lie on the Extracellular side of the membrane. Residue Asn-5 is glycosylated (N-linked (GlcNAc...) asparagine). The helical transmembrane segment at 28-48 (WISFPLCTMYSIAITGNFGLM) threads the bilayer. Over 49 to 56 (YLIYCDEA) the chain is Cytoplasmic. Residues 57-77 (LHRPMYVFLALLSFTDVLMCT) traverse the membrane as a helical segment. At 78-101 (STLPNTLFILWFNLKEIDFKACLA) the chain is on the extracellular side. Cys-99 and Cys-191 are joined by a disulfide. A helical membrane pass occupies residues 102 to 122 (QMFFVHTFTGMESGVLMLMAL). Topologically, residues 123-141 (DHCVAICFPLRYATILTNS) are cytoplasmic. Residues 142–162 (VIAKAGFLTFLRGVMLVIPST) traverse the membrane as a helical segment. Residues 163 to 198 (FLTKRLPYCKGNVIPHTYCDHMSVAKISCGNVRVNA) are Extracellular-facing. A helical membrane pass occupies residues 199–219 (IYGLIVALLIGGFDILCITIS). Over 220–239 (YTMILQAVVSLSSADARQKA) the chain is Cytoplasmic. Residues 240-260 (FSTCTAHFCAIVLTYVPAFFT) traverse the membrane as a helical segment. Residues 261 to 276 (FFTHHFGGHTIPLHIH) lie on the Extracellular side of the membrane. Residues 277 to 297 (IIMANLYLLMPPTMNPIVYGV) traverse the membrane as a helical segment. Over 298-320 (KTRQVRESVIRFFLKGKDNSHNF) the chain is Cytoplasmic.

It belongs to the G-protein coupled receptor 1 family.

It localises to the cell membrane. In terms of biological role, odorant receptor. The polypeptide is Olfactory receptor 52N1 (OR52N1) (Homo sapiens (Human)).